Reading from the N-terminus, the 437-residue chain is Elongation factor 1-gamma (437 aa).

Alanine 2 bears the N-acetylalanine mark. The region spanning 2 to 87 is the GST N-terminal domain; that stretch reads AAGTLYTYPE…YVSNEELRGS (86 aa). A GST C-terminal domain is found at 88-216; that stretch reads TPEAAAQVVQ…VKLCEKMAQF (129 aa). Residues lysine 147 and lysine 212 each carry the N6-acetyllysine modification. The span at 221-254 shows a compositional bias: basic and acidic residues; the sequence is FAESQPKKDTPRKEKGSREEKQKPQAERKEEKKA. The tract at residues 221–268 is disordered; it reads FAESQPKKDTPRKEKGSREEKQKPQAERKEEKKAAAPAPEEEMDECEQ. A Glycyl lysine isopeptide (Lys-Gly) (interchain with G-Cter in SUMO1) cross-link involves residue lysine 253. Positions 276-437 constitute an EF-1-gamma C-terminal domain; it reads AKDPFAHLPK…KAFNQGKIFK (162 aa). A Glycyl lysine isopeptide (Lys-Gly) (interchain with G-Cter in SUMO2) cross-link involves residue lysine 285. Lysine 401 bears the N6-acetyllysine mark. Residue lysine 434 is modified to N6-acetyllysine; alternate. Position 434 is an N6-malonyllysine; alternate (lysine 434).

EF-1 is composed of four subunits: alpha, beta, delta, and gamma.

Probably plays a role in anchoring the complex to other cellular components. This chain is Elongation factor 1-gamma (EEF1G), found in Equus caballus (Horse).